The following is a 138-amino-acid chain: Basic phospholipase A2 ammodytoxin B (138 aa).

A signal peptide spans 1–16 (MRTLWIVAVCLIGVEG). Intrachain disulfides connect Cys-42–Cys-131, Cys-44–Cys-60, Cys-59–Cys-111, Cys-65–Cys-138, Cys-66–Cys-104, Cys-73–Cys-97, and Cys-91–Cys-102. Tyr-43, Gly-45, and Gly-47 together coordinate Ca(2+). His-63 is a catalytic residue. Asp-64 serves as a coordination point for Ca(2+). The active site involves Asp-105.

This sequence belongs to the phospholipase A2 family. Group II subfamily. D49 sub-subfamily. As to quaternary structure, monomer. Binds to calmodulin, coagulation factor X (F10), M-type PLA2 receptor (R-180), 14-3-3 proteins gamma (YWHAG) and epsilon (YWHAE), and R25, a mitochondrial membrane protein. It depends on Ca(2+) as a cofactor. Expressed by the venom gland.

Its subcellular location is the secreted. It is found in the host cytoplasm. The protein resides in the host cytosol. It catalyses the reaction a 1,2-diacyl-sn-glycero-3-phosphocholine + H2O = a 1-acyl-sn-glycero-3-phosphocholine + a fatty acid + H(+). In terms of biological role, snake venom phospholipase A2 (PLA2) that acts as a presynaptic neurotoxin, an inhibitor of blood coagulation, and has been found to bind with high affinity to intracellular proteins. The response of indirectly stimulated neuromuscular preparations to ammodytoxin (Atx) is triphasic. The first phase, the transient inhibition of the acetylcholine (ACh) release, starts soon after the addition of Atx and lasts for several minutes. This phase is probably independent of Atx enzymatic activity. The effect may be due to the specific binding of the toxin to presynaptic receptors. These receptors, called N-type receptors, are still unidentified. It is noteworthy that a neuronal isoform of the M-type PLA2 receptor (R180) has been identified as a high-affinity receptor for Atx in neuronal plasma membranes. It was demonstrated however that this receptor is not essential for expression of neurotoxicity by Atx. The second phase corresponds to an augmentation of neurotransmitter release. A peak is reached 10-20 minutes after exposure of the preparation to Atx and is followed by a gradual reduction. In this phase, the enzymatic activity of Atx of the mammalian is not significant. It is speculated that the increased release of neurotransmitter in this phase is induced by the interference of Atx with voltage-gated potassium channels. Measurements of ionic currents showed however that voltage-gated potassium channels are not affected by Atx. The third phase of the response of neuromuscular preparations to Atx, which corresponds to a complete and irreversible paralysis, is clearly dependent on the hydrolytic activity of the toxin. In addition to its presynaptic neurotoxicity, Atx shows an anticoagulant activity by binding with high affinity to activated coagulation factor X (F10) thus inhibiting the formation of the prothrombinase complex (FX/FV) and its activity (IC(50) is 82 nM). Surprisingly, Atx was discovered to bind intracellular proteins such as calmodulin (CaM), 14-3-3 proteins gamma (YWHAG) and epsilon (YWHAE) (by similarity with AtxC), as well as R25 (by similarity with AtxC), a mitochondrial integral membrane protein found in cerebral cortex. These findings raised a doubt about the dogma of the exclusively extracellular action of PLA2s, defended by the potential instability of these molecules in the reducing environment of the eukaryotic cytosol coupled with their possible inability to act as enzymes in this cellular compartment, due to too low concentration of calcium ions. This hypothesis was challenged efficiently by demonstrating the internalization of AtxA into a culture cells, but still remains to be directly demonstrated in vivo. PLA2 catalyzes the calcium-dependent hydrolysis of the 2-acyl groups in 3-sn-phosphoglycerides. The protein is Basic phospholipase A2 ammodytoxin B of Vipera ammodytes ammodytes (Western sand viper).